Here is a 112-residue protein sequence, read N- to C-terminus: Nucleoid-associated protein FTF0810c (112 aa).

Residues 1–27 form a disordered region; that stretch reads MNFDMSKLMQQAQKMQEQMKKAQQERE. A compositionally biased stretch (basic and acidic residues) spans 17–27; that stretch reads EQMKKAQQERE.

The protein belongs to the YbaB/EbfC family. In terms of assembly, homodimer.

Its subcellular location is the cytoplasm. The protein localises to the nucleoid. In terms of biological role, binds to DNA and alters its conformation. May be involved in regulation of gene expression, nucleoid organization and DNA protection. In Francisella tularensis subsp. tularensis (strain FSC 198), this protein is Nucleoid-associated protein FTF0810c.